A 258-amino-acid polypeptide reads, in one-letter code: Glutathione S-transferase DHAR3, chloroplastic (258 aa).

Residues 1–42 (MISLRFQPSTTAGVLSASVSRAGFIKRCGSTKPGRVGRFVTM) constitute a chloroplast transit peptide. At Cys-52 the chain carries S-glutathionyl cysteine. Glutathione contacts are provided by Lys-54 and Asp-65. L-ascorbate-binding residues include Lys-54 and Asp-65. The region spanning 56–129 (SITTPNKLGD…DVITQALEEK (74 aa)) is the GST N-terminal domain. Cys-66 acts as the Nucleophile in catalysis. Cys-66 and Cys-69 are disulfide-bonded. Residues 66–71 (CPFCQK) carry the Glutathione-binding motif. Lys-93, Val-106, Ser-119, His-205, and Trp-252 together coordinate glutathione. The 129-residue stretch at 130-258 (YPEPPLATPP…IAGWRPKVMG (129 aa)) folds into the GST C-terminal domain. Lys-255 contributes to the L-ascorbate binding site.

The protein belongs to the GST superfamily. DHAR family. In terms of assembly, monomer. Interacts with TRX3. In terms of processing, partial S-glutathionylation and intramolecular disulfide bond formation between Cys-66 and Cys-69 in the presence of oxidized glutathione (GSSG). Could be reduced by TRX-dependent process.

The protein resides in the plastid. It localises to the chloroplast stroma. The enzyme catalyses RX + glutathione = an S-substituted glutathione + a halide anion + H(+). The catalysed reaction is L-dehydroascorbate + 2 glutathione = glutathione disulfide + L-ascorbate. Functionally, displays a dual function. As a soluble protein, exhibits glutathione-dependent thiol transferase and dehydroascorbate (DHA) reductase activities. Key component of the ascorbate recycling system. Involved in the redox homeostasis, especially in scavenging of ROS under oxidative stresses. The chain is Glutathione S-transferase DHAR3, chloroplastic (DHAR3) from Arabidopsis thaliana (Mouse-ear cress).